The primary structure comprises 440 residues: Thymidine phosphorylase (440 aa).

Belongs to the thymidine/pyrimidine-nucleoside phosphorylase family. In terms of assembly, homodimer.

It catalyses the reaction thymidine + phosphate = 2-deoxy-alpha-D-ribose 1-phosphate + thymine. Its pathway is pyrimidine metabolism; dTMP biosynthesis via salvage pathway; dTMP from thymine: step 1/2. The enzymes which catalyze the reversible phosphorolysis of pyrimidine nucleosides are involved in the degradation of these compounds and in their utilization as carbon and energy sources, or in the rescue of pyrimidine bases for nucleotide synthesis. This Yersinia enterocolitica serotype O:8 / biotype 1B (strain NCTC 13174 / 8081) protein is Thymidine phosphorylase.